The following is a 122-amino-acid chain: Small ribosomal subunit protein uS13 (122 aa).

The disordered stretch occupies residues 95 to 122 (GLPVHGQRTHTNARTRKGPRRGAVGKKK).

The protein belongs to the universal ribosomal protein uS13 family. In terms of assembly, part of the 30S ribosomal subunit. Forms a loose heterodimer with protein S19. Forms two bridges to the 50S subunit in the 70S ribosome.

Located at the top of the head of the 30S subunit, it contacts several helices of the 16S rRNA. In the 70S ribosome it contacts the 23S rRNA (bridge B1a) and protein L5 of the 50S subunit (bridge B1b), connecting the 2 subunits; these bridges are implicated in subunit movement. Contacts the tRNAs in the A and P-sites. The sequence is that of Small ribosomal subunit protein uS13 from Nitratidesulfovibrio vulgaris (strain DSM 19637 / Miyazaki F) (Desulfovibrio vulgaris).